The following is a 686-amino-acid chain: Probable serine/threonine-protein kinase pdkA (686 aa).

Residues 1 to 31 (MENIVITNTSGGGGGGVPSSSTDPPNNTTTT) form a disordered region. Low complexity predominate over residues 18–31 (PSSSTDPPNNTTTT). One can recognise a Protein kinase domain in the interval 69 to 449 (FIIGKVLGEG…FDNLKAHPFF (381 aa)). Residues 79–81 (SYG) and Lys-98 each bind ATP. Residues 100 to 144 (LEKKQIIKENKIKYVQIEKEIFCKSNHPNIVKLFFTFRSEQCLYY) form a PIF-pocket region. ATP contacts are provided by residues 147-149 (ELC) and Asp-153. The active-site Proton acceptor is the Asp-192. Positions 196 and 210 each coordinate ATP. Disordered stretches follow at residues 211 to 321 (FGTG…NTNT) and 481 to 584 (LFSP…NNIS). The segment covering 222 to 257 (SSQQQQQQQQQQQQLPTNSSGNLSSLLNNVNNLSVS) has biased composition (low complexity). The span at 258–267 (TDLTQQQQNR) shows a compositional bias: polar residues. 3 stretches are compositionally biased toward low complexity: residues 268 to 279 (TSSVDSASTTDS), 288 to 321 (TTTT…NTNT), and 503 to 568 (NSCN…QRSG). In terms of domain architecture, PH spans 593–682 (VIYQGLVWKR…DSIKSVILSS (90 aa)).

This sequence belongs to the protein kinase superfamily. AGC Ser/Thr protein kinase family. PDPK1 subfamily.

It catalyses the reaction L-seryl-[protein] + ATP = O-phospho-L-seryl-[protein] + ADP + H(+). The enzyme catalyses L-threonyl-[protein] + ATP = O-phospho-L-threonyl-[protein] + ADP + H(+). In Dictyostelium discoideum (Social amoeba), this protein is Probable serine/threonine-protein kinase pdkA (pdkA).